We begin with the raw amino-acid sequence, 363 residues long: Nucleoporin SEH1 (363 aa).

WD repeat units follow at residues 15 to 54, 60 to 101, 108 to 149, 158 to 206, 223 to 264, and 287 to 326; these read AHRD…NWRR, CHGG…SEKD, QWIR…RIYE, RWNL…VIYE, DLPC…SAIL, and GDHR…QWVK.

Belongs to the WD repeat SEC13 family. In terms of assembly, component of the nuclear pore complex (NPC). Probably part of the GATOR complex.

The protein localises to the nucleus. It is found in the nuclear pore complex. It localises to the lysosome membrane. The protein resides in the nucleus envelope. Its function is as follows. Probable component of the nuclear pore complex (NPC) which is involved in the trafficking of macromolecules between the cytoplasm and nucleus. Functionally, as a component of the GATOR complex may function in the amino acid-sensing branch of the TORC1 signaling pathway. The sequence is that of Nucleoporin SEH1 from Caenorhabditis elegans.